The sequence spans 201 residues: MLAFTLRFIKNKRYLATLAGALVIIAGLTSQHAWSGNGLPQINGKALAALAKQHPVVVLFRHAERCDRSDNTCLSDSTGITVNGAQDARALGKAFSADIQNYNLYSSNTVRTIQSATWFSAGRSLTVDKKMMDCGSGIYASINTLLKKSQNKNIVIFTHNHCLTYIAKNKRGVKFDPDYLDALVMHAENGKLFLDGEFVPG.

An N-terminal signal peptide occupies residues 1-35 (MLAFTLRFIKNKRYLATLAGALVIIAGLTSQHAWS).

This sequence belongs to the phosphoglycerate mutase family. Ais subfamily.

The protein resides in the periplasm. Its pathway is bacterial outer membrane biogenesis; lipopolysaccharide metabolism. In terms of biological role, catalyzes the dephosphorylation of heptose(II) of the outer membrane lipopolysaccharide core. The sequence is that of Lipopolysaccharide core heptose(II)-phosphate phosphatase from Salmonella schwarzengrund (strain CVM19633).